The chain runs to 559 residues: DDB1- and CUL4-associated factor 10 (559 aa).

Residues 1 to 119 (MFPFGPHSPG…HGLGAGLGGP (119 aa)) form a disordered region. Phosphoserine occurs at positions 53, 63, 89, and 92. Residues 56 to 86 (RPGAPSLSPAPRSGELGLPGAPESSTASAPG) are compositionally biased toward low complexity. Residues 87 to 97 (EPSPPSPPCRR) are compositionally biased toward pro residues. Omega-N-methylarginine is present on Arg134. WD repeat units lie at residues 166-205 (RTHG…HIKT), 209-247 (AHED…TKVC), 251-290 (GHTS…EDGC), and 296-335 (FHTR…KSLE). Ser349 is subject to Phosphoserine. Positions 350 to 367 (SSDLTTSSSSSGPRVSGS) are enriched in low complexity. A disordered region spans residues 350–396 (SSDLTTSSSSSGPRVSGSPCHHSDSNSSEKHMSRASQREGVSPRNSL). Residues 370–381 (HHSDSNSSEKHM) are compositionally biased toward basic and acidic residues. 3 WD repeats span residues 408–448 (DHGN…QEGA), 470–508 (VGRG…SELV), and 526–559 (SHND…QPKF).

Belongs to the WD repeat DCAF10 family. As to quaternary structure, interacts with DDB1.

It participates in protein modification; protein ubiquitination. Its function is as follows. May function as a substrate receptor for CUL4-DDB1 E3 ubiquitin-protein ligase complex. This Homo sapiens (Human) protein is DDB1- and CUL4-associated factor 10 (DCAF10).